The sequence spans 70 residues: DNA-binding transcriptional activator AlpA (70 aa).

The segment at residues 12–31 (LPAVIQKTGMARATIYDWLN) is a DNA-binding region (H-T-H motif).

Its function is as follows. Positive regulator of the expression of the slpA gene. When overexpressed, leads to suppression of the capsule overproduction and UV sensitivity phenotypes of cells mutant for the Lon ATP-dependent protease. Part of the cryptic P4-like prophage CP4-57. Overexpression of AlpA leads to excision of the CP4-57 prophage by IntA. This inactivates ssrA (the gene upstream of the prophage) that encodes tmRNA which is required to rescue stalled ribosomes in a process known as trans-translation. This is DNA-binding transcriptional activator AlpA from Escherichia coli (strain K12).